A 537-amino-acid chain; its full sequence is Periplasmic murein peptide-binding protein MppA (537 aa).

Residues 1–22 form the signal peptide; the sequence is MKHSVSVTCCALLVSSISLSYA. L-alanyl-gamma-D-glutamyl-meso-2,6-diaminopimelate-binding residues include Lys-42, Val-54, Leu-56, Gln-289, Arg-424, Ser-435, Val-437, Asp-439, and Thr-506.

Belongs to the bacterial solute-binding protein 5 family. The complex is composed of two ATP-binding proteins (OppD and OppF), two transmembrane proteins (OppB and OppC) and a solute-binding protein (MppA).

It is found in the periplasm. Part of the ABC transporter complex MppA-OppBCDF involved in the uptake of the cell wall murein tripeptide L-alanyl-gamma-D-glutamyl-meso-diaminopimelate. Is involved in the recycling of cell wall peptides. Binds the cell wall peptide L-Ala-D-Gly-gamma-meso-diaminopimelic acid. Can also transport ordinary alpha-linked tripeptides such as Pro-Phe-Lys, but with much lower efficiency than OppA. Cannot bind typical tripeptides such as Lys-Glu-Lys, Lys-Lys-Lys or Ala-Ala-Ala. In Escherichia coli (strain K12), this protein is Periplasmic murein peptide-binding protein MppA.